The sequence spans 304 residues: D-alanine--D-alanine ligase (304 aa).

The ATP-grasp domain maps to 101-298 (KKIFIKNKIL…FIKLIEWILK (198 aa)). Residue 131 to 184 (EKNLKFPVVVKPINEGSSVHVYICDKTNILKNLKVLKSYNEILIEEFIPGREIQ) coordinates ATP. Positions 253, 265, and 267 each coordinate Mg(2+).

The protein belongs to the D-alanine--D-alanine ligase family. The cofactor is Mg(2+). Mn(2+) serves as cofactor.

It localises to the cytoplasm. The catalysed reaction is 2 D-alanine + ATP = D-alanyl-D-alanine + ADP + phosphate + H(+). It functions in the pathway cell wall biogenesis; peptidoglycan biosynthesis. Cell wall formation. In Pelagibacter ubique (strain HTCC1062), this protein is D-alanine--D-alanine ligase.